Here is a 295-residue protein sequence, read N- to C-terminus: Protease HtpX homolog (295 aa).

2 consecutive transmembrane segments (helical) span residues 15–35 (LVMA…GYAF) and 39–59 (AQTG…VILG). Position 143 (His-143) interacts with Zn(2+). Glu-144 is a catalytic residue. Residue His-147 coordinates Zn(2+). A run of 2 helical transmembrane segments spans residues 159 to 179 (ALAL…AMWW) and 195 to 215 (VIML…ASMA). Glu-224 is a binding site for Zn(2+).

The protein belongs to the peptidase M48B family. Requires Zn(2+) as cofactor.

It localises to the cell membrane. This is Protease HtpX homolog from Ligilactobacillus salivarius (strain UCC118) (Lactobacillus salivarius).